The following is a 1074-amino-acid chain: Carbamoyl phosphate synthase large chain (1074 aa).

The tract at residues methionine 1–aspartate 399 is carboxyphosphate synthetic domain. 12 residues coordinate ATP: arginine 129, arginine 169, glycine 175, glycine 176, glutamate 208, valine 210, glutamate 215, glycine 241, isoleucine 242, histidine 243, glutamine 284, and glutamate 296. The region spanning lysine 133–isoleucine 325 is the ATP-grasp 1 domain. Mg(2+) contacts are provided by glutamine 284, glutamate 296, and asparagine 298. Mn(2+) is bound by residues glutamine 284, glutamate 296, and asparagine 298. Residues isoleucine 400–leucine 543 form an oligomerization domain region. Positions asparagine 544 to asparagine 933 are carbamoyl phosphate synthetic domain. The 192-residue stretch at asparagine 674–alanine 865 folds into the ATP-grasp 2 domain. ATP contacts are provided by arginine 710, aspartate 749, leucine 751, glutamate 756, glycine 781, isoleucine 782, histidine 783, serine 784, glutamine 824, and glutamate 836. Mg(2+) contacts are provided by glutamine 824, glutamate 836, and asparagine 838. Residues glutamine 824, glutamate 836, and asparagine 838 each coordinate Mn(2+). The 143-residue stretch at asparagine 932 to leucine 1074 folds into the MGS-like domain. The segment at leucine 934–leucine 1074 is allosteric domain.

The protein belongs to the CarB family. In terms of assembly, composed of two chains; the small (or glutamine) chain promotes the hydrolysis of glutamine to ammonia, which is used by the large (or ammonia) chain to synthesize carbamoyl phosphate. Tetramer of heterodimers (alpha,beta)4. Requires Mg(2+) as cofactor. Mn(2+) is required as a cofactor.

The catalysed reaction is hydrogencarbonate + L-glutamine + 2 ATP + H2O = carbamoyl phosphate + L-glutamate + 2 ADP + phosphate + 2 H(+). It catalyses the reaction hydrogencarbonate + NH4(+) + 2 ATP = carbamoyl phosphate + 2 ADP + phosphate + 2 H(+). It participates in amino-acid biosynthesis; L-arginine biosynthesis; carbamoyl phosphate from bicarbonate: step 1/1. The protein operates within pyrimidine metabolism; UMP biosynthesis via de novo pathway; (S)-dihydroorotate from bicarbonate: step 1/3. In terms of biological role, large subunit of the glutamine-dependent carbamoyl phosphate synthetase (CPSase). CPSase catalyzes the formation of carbamoyl phosphate from the ammonia moiety of glutamine, carbonate, and phosphate donated by ATP, constituting the first step of 2 biosynthetic pathways, one leading to arginine and/or urea and the other to pyrimidine nucleotides. The large subunit (synthetase) binds the substrates ammonia (free or transferred from glutamine from the small subunit), hydrogencarbonate and ATP and carries out an ATP-coupled ligase reaction, activating hydrogencarbonate by forming carboxy phosphate which reacts with ammonia to form carbamoyl phosphate. This is Carbamoyl phosphate synthase large chain from Methanothrix thermoacetophila (strain DSM 6194 / JCM 14653 / NBRC 101360 / PT) (Methanosaeta thermophila).